The sequence spans 288 residues: MSKKSSLGRGLDALLTKKGEPVAQAGTGTQVQTLKIERIAQAAYQPRQVFEPESLAELAQSIREKGVLQPLLVRPRGDAFEIVAGERRWRASQLAGLTELPVMIRDLGDREALEIAIVENLQREDLGPLEEARAYQALLDQGLNQEGVAQAVGKGRSTVTNALRLLTLPEPVLRALDEGSISASHARAVLTQPEADRLWAFEQIRSRGLNVREAEALKRERGGRDKGQGAPIKVNPPRAYRQLELDLSRRTGTRVKITGEDKGRVELNYGSREELDRILQILGYEAEE.

The protein belongs to the ParB family.

In terms of biological role, involved in chromosome partition. Localize to both poles of the predivisional cell following completion of DNA replication. Binds to the DNA origin of replication. This chain is Probable chromosome 1-partitioning protein ParB (parB1), found in Deinococcus radiodurans (strain ATCC 13939 / DSM 20539 / JCM 16871 / CCUG 27074 / LMG 4051 / NBRC 15346 / NCIMB 9279 / VKM B-1422 / R1).